A 451-amino-acid polypeptide reads, in one-letter code: Lipase member H (451 aa).

The first 16 residues, 1–16 (MLRLCFFISFMCLVKS), serve as a signal peptide directing secretion. Asn-66 is a glycosylation site (N-linked (GlcNAc...) asparagine). Ser-154 functions as the Nucleophile in the catalytic mechanism. Asp-178 functions as the Charge relay system in the catalytic mechanism. Residues Cys-233 and Cys-246 are joined by a disulfide bond. His-248 functions as the Charge relay system in the catalytic mechanism. 3 disulfides stabilise this stretch: Cys-270-Cys-281, Cys-284-Cys-292, and Cys-427-Cys-446.

It belongs to the AB hydrolase superfamily. Lipase family. As to quaternary structure, interacts with TTMP/C3orf52. Expressed in placenta and colon. Weakly expressed in small intestine.

The protein resides in the secreted. The protein localises to the cell membrane. It carries out the reaction 1-hexadecanoyl-2-(9Z-octadecenoyl)-sn-glycero-3-phosphate + H2O = 2-(9Z-octadecenoyl)-sn-glycero-3-phosphate + hexadecanoate + H(+). In terms of biological role, hydrolyzes specifically phosphatidic acid (PA) to produce 2-acyl lysophosphatidic acid (LPA; a potent bioactive lipid mediator) and fatty acid. Does not hydrolyze other phospholipids, like phosphatidylserine (PS), phosphatidylcholine (PC) and phosphatidylethanolamine (PE) or triacylglycerol (TG). The protein is Lipase member H (Liph) of Mus musculus (Mouse).